Here is a 331-residue protein sequence, read N- to C-terminus: Ornithine carbamoyltransferase (331 aa).

Residues 55–58 (STRT), Q82, R106, and 133–136 (HPTQ) each bind carbamoyl phosphate. L-ornithine is bound by residues N166, D230, and 234–235 (SM). Carbamoyl phosphate-binding positions include 272 to 273 (CL) and R317.

The protein belongs to the aspartate/ornithine carbamoyltransferase superfamily. OTCase family.

The protein resides in the cytoplasm. It carries out the reaction carbamoyl phosphate + L-ornithine = L-citrulline + phosphate + H(+). Its pathway is amino-acid biosynthesis; L-arginine biosynthesis; L-arginine from L-ornithine and carbamoyl phosphate: step 1/3. Functionally, reversibly catalyzes the transfer of the carbamoyl group from carbamoyl phosphate (CP) to the N(epsilon) atom of ornithine (ORN) to produce L-citrulline. The sequence is that of Ornithine carbamoyltransferase (argF) from Neisseria meningitidis serogroup B (strain ATCC BAA-335 / MC58).